A 462-amino-acid chain; its full sequence is Glycoprotein endo-alpha-1,2-mannosidase (462 aa).

Residues 1–9 (MAKFRRRTC) are Cytoplasmic-facing. Residues 10–30 (ILLSLFILFIFSLMMGLKMLW) traverse the membrane as a helical; Signal-anchor for type II membrane protein segment. The Lumenal segment spans residues 31–462 (PNAASFGPPF…YALDQQQPAS (432 aa)). Positions 60–462 (DFQRSDRINM…YALDQQQPAS (403 aa)) are catalytic.

It belongs to the glycosyl hydrolase 99 family. In terms of processing, undergoes proteolytic cleavage in the C-terminal region.

The protein localises to the golgi apparatus membrane. The enzyme catalyses N-{alpha-Glc-(1-&gt;3)-alpha-Man-(1-&gt;2)-alpha-Man-(1-&gt;2)-alpha-Man-(1-&gt;3)-[alpha-Man-(1-&gt;2)-alpha-Man-(1-&gt;3)-[alpha-Man-(1-&gt;2)-alpha-Man-(1-&gt;6)]-alpha-Man-(1-&gt;6)]-beta-Man-(1-&gt;4)-beta-GlcNAc-(1-&gt;4)-beta-GlcNAc}-L-asparaginyl-[protein] + H2O = alpha-D-glucosyl-(1-&gt;3)-D-mannopyranose + N(4)-{alpha-D-Man-(1-&gt;2)-alpha-D-Man-(1-&gt;3)-[alpha-D-Man-(1-&gt;2)-alpha-D-Man-(1-&gt;3)-[alpha-D-Man-(1-&gt;2)-alpha-D-Man-(1-&gt;6)]-alpha-D-Man-(1-&gt;6)]-beta-D-Man-(1-&gt;4)-beta-D-GlaNAc-(1-&gt;4)-beta-D-GlcNAc}-L-asparaginyl-[protein] (N-glucan mannose isomer 8A1,2,3B1,2). The polypeptide is Glycoprotein endo-alpha-1,2-mannosidase (Manea) (Mus musculus (Mouse)).